A 219-amino-acid chain; its full sequence is Guanylate kinase (219 aa).

The Guanylate kinase-like domain maps to 15-194; it reads GLMFVLSSPS…AFAEVQSILK (180 aa). Residue 22–29 participates in ATP binding; the sequence is SPSGAGKT.

The protein belongs to the guanylate kinase family.

It is found in the cytoplasm. It carries out the reaction GMP + ATP = GDP + ADP. Its function is as follows. Essential for recycling GMP and indirectly, cGMP. This is Guanylate kinase from Bradyrhizobium diazoefficiens (strain JCM 10833 / BCRC 13528 / IAM 13628 / NBRC 14792 / USDA 110).